The sequence spans 41 residues: Large ribosomal subunit protein bL36 (41 aa).

This sequence belongs to the bacterial ribosomal protein bL36 family.

The sequence is that of Large ribosomal subunit protein bL36 from Rickettsia massiliae (strain Mtu5).